The primary structure comprises 345 residues: Membrane progestin receptor alpha (345 aa).

Residues 1–74 (MAMAVAQKFN…FQRHNEAVNV (74 aa)) are Cytoplasmic-facing. Residues 75–95 (WTHLLAALALLLRLIGLAASV) form a helical membrane-spanning segment. Topologically, residues 96-102 (DFREDPH) are extracellular. A helical membrane pass occupies residues 103–123 (ALPLFFIVLASFTYLSFSAVA). Residues 124–136 (HLLQAKSEFWHYS) lie on the Cytoplasmic side of the membrane. Residues 137-157 (FFFLDYVGVAVYQFGSALAHF) form a helical membrane-spanning segment. The Extracellular portion of the chain corresponds to 158–168 (YYAIEPSWHDK). The chain crosses the membrane as a helical span at residues 169–189 (VQAIFLPTAAFLAWLSCAGSC). Residues 190-243 (YNKYSQKPGLLGRIFQEAPSALAYVLDISPVLHRIIVSPLPAEEDPALLYHKCQ) lie on the Cytoplasmic side of the membrane. A helical transmembrane segment spans residues 244-264 (VVFFLLAAAFFSTVMPESWFP). Over 265–268 (GSCH) the chain is Extracellular. The helical transmembrane segment at 269–289 (IFGQGHQVFHVFLVLCTLAQL) threads the bilayer. Topologically, residues 290–315 (EAVTLDYQARRGIYEPLHARWPHNFS) are cytoplasmic. A helical membrane pass occupies residues 316–336 (GLFLLTVASSSLTALLLSQLV). Topologically, residues 337–345 (RRKLHQKTK) are extracellular.

Belongs to the ADIPOR family. In terms of tissue distribution, detected in most adult tissues. Higher expression found in white fat and liver than brown fat and skeletal muscle.

The protein resides in the cell membrane. In terms of biological role, plasma membrane progesterone (P4) receptor coupled to G proteins. Seems to act through a G(i) mediated pathway. May be involved in oocyte maturation. Involved in neurosteroid inhibition of apoptosis. Also binds dehydroepiandrosterone (DHEA), pregnanolone, pregnenolone and allopregnanolone. This is Membrane progestin receptor alpha from Mus musculus (Mouse).